Reading from the N-terminus, the 104-residue chain is Circadian clock oscillator protein KaiB (104 aa).

It belongs to the KaiB family. In terms of assembly, the KaiABC complex composition changes during the circadian cycle to control KaiC phosphorylation. Complexes KaiC(6), KaiA(2-4):KaiC(6), KaiB(6):KaiC(6) and KaiC(6):KaiB(6):KaiA(12) are among the most important forms, many form cooperatively. Undergoes a major conformational rearrangment; in the free state forms homotetramers as a dimer of dimers. When bound to the CI domain of KaiC switches to a monomeric thioredoxin-fold (KaiB(fs)). KaiB(fs) binds CikA, leading it to dephosphorylate phospho-RpaA.

Functionally, key component of the KaiABC oscillator complex, which constitutes the main circadian regulator in cyanobacteria. Complex composition changes during the circadian cycle to control KaiC phosphorylation. KaiA stimulates KaiC autophosphorylation, while KaiB sequesters KaiA, leading to KaiC autodephosphorylation. Phospho-Ser-431 KaiC accumulation triggers binding of KaiB to form the KaiB(6):KaiC(6) complex, leading to changes in output regulators CikA and SasA. KaiB switches to a thioredoxin-like fold (KaiB(fs)) when bound to KaiC. KaiB(6):KaiC(6) formation exposes a site for KaiA binding that sequesters KaiA from KaiC, making the KaiC(6):KaiB(6):KaiA(12) complex that results in KaiC autodephosphorylation. Its function is as follows. A metamorphic protein which reversibly switches between an inactive tetrameric fold and a rare, thioredoxin-like monomeric fold (KaiB(fs)). KaiB(fs) binds phospho-KaiC, KaiA and CikA. KaiA and CikA compete for binding to KaiB(fs), and KaiB(fs) and SasA compete for binding to KaiC, thus the clock oscillator and output signal pathway are tightly coupled. This chain is Circadian clock oscillator protein KaiB, found in Parasynechococcus marenigrum (strain WH8102).